A 209-amino-acid chain; its full sequence is Uracil phosphoribosyltransferase (209 aa).

5-phospho-alpha-D-ribose 1-diphosphate-binding positions include Arg-79, Arg-104, and 131–139 (DPMLATGGS). Uracil is bound by residues Ile-194 and 199-201 (GDA). Asp-200 is a 5-phospho-alpha-D-ribose 1-diphosphate binding site.

The protein belongs to the UPRTase family. Mg(2+) serves as cofactor.

The catalysed reaction is UMP + diphosphate = 5-phospho-alpha-D-ribose 1-diphosphate + uracil. It participates in pyrimidine metabolism; UMP biosynthesis via salvage pathway; UMP from uracil: step 1/1. With respect to regulation, allosterically activated by GTP. Its function is as follows. Catalyzes the conversion of uracil and 5-phospho-alpha-D-ribose 1-diphosphate (PRPP) to UMP and diphosphate. This Francisella tularensis subsp. novicida (strain U112) protein is Uracil phosphoribosyltransferase.